We begin with the raw amino-acid sequence, 634 residues long: DNA-directed RNA polymerase subunit gamma (634 aa).

The Zn(2+) site is built by Cys74, Cys76, Cys89, and Cys92. The Mg(2+) site is built by Asp471, Asp473, and Asp475.

The protein belongs to the RNA polymerase beta' chain family. RpoC1 subfamily. In cyanobacteria the RNAP catalytic core is composed of 2 alpha, 1 beta, 1 beta', 1 gamma and 1 omega subunit. When a sigma factor is associated with the core the holoenzyme is formed, which can initiate transcription. Requires Mg(2+) as cofactor. Zn(2+) serves as cofactor.

It carries out the reaction RNA(n) + a ribonucleoside 5'-triphosphate = RNA(n+1) + diphosphate. Functionally, DNA-dependent RNA polymerase catalyzes the transcription of DNA into RNA using the four ribonucleoside triphosphates as substrates. This is DNA-directed RNA polymerase subunit gamma from Synechococcus sp. (strain CC9605).